A 287-amino-acid polypeptide reads, in one-letter code: Toxin zeta (287 aa).

40 to 47 (GQPGSGKT) contacts ATP. The tract at residues 250-287 (MVQNQHQETPEFKAIQQKMESLQPPTPPIPKTPKLPGI) is disordered. Pro residues predominate over residues 273-287 (PPTPPIPKTPKLPGI).

The protein belongs to the zeta toxin family. In the presence of the epsilon antitoxin, forms an inactive PezA(2)PezT(2) heterotetramer.

The enzyme catalyses UDP-N-acetyl-alpha-D-glucosamine + ATP = UDP-N-acetyl-alpha-D-glucosamine 3'-phosphate + ADP + H(+). Functionally, toxic component of a type II toxin-antitoxin (TA) system. Phosphorylates UDP-N-acetyl-D-glucosamine (UNAG) on the 3'-hydroxyl group of the N-acetyl-D-glucosamine moiety, yielding UNAG-3P. UNAG-3P inhibits MurA, the first committed step in cell wall synthesis, which is then blocked. Phosphorylation is inhibited by cognate epsilon antitoxin. Part of a postsegregational killing (PSK) system involved in the killing of plasmid-free cells. The zeta toxin induces programmed cell death. This Streptococcus agalactiae protein is Toxin zeta.